Reading from the N-terminus, the 540-residue chain is Phenylalanine--tRNA ligase beta subunit (540 aa).

Residues 268-343 (LQHKSIKITA…ITYGYNNLSP (76 aa)) enclose the B5 domain. 4 residues coordinate Mg(2+): Asp321, Asp327, Glu330, and Glu331.

This sequence belongs to the phenylalanyl-tRNA synthetase beta subunit family. Type 2 subfamily. Tetramer of two alpha and two beta subunits. It depends on Mg(2+) as a cofactor.

It localises to the cytoplasm. It carries out the reaction tRNA(Phe) + L-phenylalanine + ATP = L-phenylalanyl-tRNA(Phe) + AMP + diphosphate + H(+). In Sulfurisphaera tokodaii (strain DSM 16993 / JCM 10545 / NBRC 100140 / 7) (Sulfolobus tokodaii), this protein is Phenylalanine--tRNA ligase beta subunit.